The chain runs to 198 residues: Virion infectivity factor (198 aa).

Residues 76 to 115 (GERPWHLGHGIGLEWRQGKYSTQIDPETADQLIHTRYFTC) form an RNA-binding region. Position 97 is a phosphothreonine; by host MAP4K1 (Thr-97). The HCCH motif motif lies at 109 to 140 (HTRYFTCFAAGAVRQAILGERILTFCHFQSGH). Position 145 is a phosphothreonine; by host (Thr-145). The short motif at 145–154 (TLQFLAFRKV) is the BC-box-like motif element. The tract at residues 152-170 (RKVVESQDKQPKGPRRPLP) is multimerization. The disordered stretch occupies residues 159–198 (DKQPKGPRRPLPSVTKLTEDRWNKHRTTTGRRENHTLSGC). Phosphoserine; by host MAP4K1 is present on Ser-171. The membrane association stretch occupies residues 177–178 (ED). Over residues 188 to 198 (GRRENHTLSGC) the composition is skewed to basic and acidic residues.

Belongs to the primate lentivirus group Vif protein family. In terms of assembly, homomultimer; in vitro and presumably in vivo. Interacts with viral Pr55Gag precursor, host APOBEC3G, UBCE7IP1 isoform 3/ZIN, ABCE1 and possibly with SAT. Forms an E3 ligase complex by interacting with host CUL5 and elongin BC complex (ELOB and ELOC). Post-translationally, highly phosphorylated on serine and threonine residues. Thr-97 and Ser-171 are phosphorylated by the mitogen activated kinase MAP4K1. Polyubiquitinated and degraded by the proteasome in the presence of APOBEC3G.

It is found in the host cytoplasm. The protein resides in the host cell membrane. The protein localises to the virion. In terms of biological role, counteracts the innate antiviral activity of APOBEC3G. Forms a complex with host APOBEC3G thus preventing the entry of this lethally hypermutating enzyme into progeny virions. Functions as an adapter molecule, recruiting APOBEC3G to the ubiquitin-proteasome machinery. Targets APOBEC3G for degradation through the assembly with elongin BC complex, CUL5 and RBX1. Binds viral RNA and affects the stability of viral nucleoprotein core. May play a role in viral morphology. Interacts with host ABCE1, which seems to be involved in lentiviruses capsid formation and displays RNase L inhibitor activity. This interaction may play a role in protecting viral RNA from damage during viral assembly. May interact with host SAT, which is a regulator of polyamine cell level. This interaction may be relevant since polyamines affect viral RNA properties. The protein is Virion infectivity factor of Pan troglodytes (Chimpanzee).